We begin with the raw amino-acid sequence, 485 residues long: 3-isopropylmalate dehydratase large subunit (485 aa).

Residues Cys367, Cys427, and Cys430 each coordinate [4Fe-4S] cluster. Residues Ser439–Asn451 are compositionally biased toward polar residues. The tract at residues Ser439–Thr462 is disordered.

Belongs to the aconitase/IPM isomerase family. LeuC type 1 subfamily. In terms of assembly, heterodimer of LeuC and LeuD. [4Fe-4S] cluster serves as cofactor.

It carries out the reaction (2R,3S)-3-isopropylmalate = (2S)-2-isopropylmalate. It participates in amino-acid biosynthesis; L-leucine biosynthesis; L-leucine from 3-methyl-2-oxobutanoate: step 2/4. Functionally, catalyzes the isomerization between 2-isopropylmalate and 3-isopropylmalate, via the formation of 2-isopropylmaleate. The sequence is that of 3-isopropylmalate dehydratase large subunit from Actinoplanes teichomyceticus.